A 583-amino-acid polypeptide reads, in one-letter code: Aspartate--tRNA ligase (583 aa).

L-aspartate is bound at residue Glu174. The aspartate stretch occupies residues 198 to 201 (QITK). L-aspartate is bound at residue Arg220. ATP is bound by residues 220–222 (RDE) and Gln229. His443 provides a ligand contact to L-aspartate. An ATP-binding site is contributed by Glu477. Arg484 lines the L-aspartate pocket. 529–532 (GLDR) contacts ATP.

The protein belongs to the class-II aminoacyl-tRNA synthetase family. Type 1 subfamily. Homodimer.

The protein resides in the cytoplasm. It catalyses the reaction tRNA(Asp) + L-aspartate + ATP = L-aspartyl-tRNA(Asp) + AMP + diphosphate. In terms of biological role, catalyzes the attachment of L-aspartate to tRNA(Asp) in a two-step reaction: L-aspartate is first activated by ATP to form Asp-AMP and then transferred to the acceptor end of tRNA(Asp). The chain is Aspartate--tRNA ligase from Streptococcus thermophilus (strain ATCC BAA-491 / LMD-9).